The chain runs to 197 residues: Peptide deformylase (197 aa).

2 residues coordinate Fe cation: Cys106 and His148. Residue Glu149 is part of the active site. His152 serves as a coordination point for Fe cation.

It belongs to the polypeptide deformylase family. Fe(2+) serves as cofactor.

The enzyme catalyses N-terminal N-formyl-L-methionyl-[peptide] + H2O = N-terminal L-methionyl-[peptide] + formate. Functionally, removes the formyl group from the N-terminal Met of newly synthesized proteins. Requires at least a dipeptide for an efficient rate of reaction. N-terminal L-methionine is a prerequisite for activity but the enzyme has broad specificity at other positions. This chain is Peptide deformylase, found in Mycolicibacterium paratuberculosis (strain ATCC BAA-968 / K-10) (Mycobacterium paratuberculosis).